The sequence spans 365 residues: Alternative oxidase 2, mitochondrial (365 aa).

Residues Thr32–Ala46 are compositionally biased toward low complexity. The disordered stretch occupies residues Thr32–His52. The Fe cation site is built by Glu166, Glu205, and His208. Residues Trp220 to Leu242 traverse the membrane as a helical segment. The Fe cation site is built by Glu256, Glu257, Glu312, and His315. Residues Gln345–Leu365 are disordered.

This sequence belongs to the alternative oxidase family. Fe cation serves as cofactor.

The protein resides in the mitochondrion inner membrane. Catalyzes cyanide-resistant oxygen consumption. May increase respiration when the cytochrome respiratory pathway is restricted, or in response to low temperatures. The chain is Alternative oxidase 2, mitochondrial (AOX2) from Candida albicans (Yeast).